A 137-amino-acid polypeptide reads, in one-letter code: Probable 4-amino-4-deoxy-L-arabinose-phosphoundecaprenol flippase subunit ArnF (137 aa).

Topologically, residues 1–5 (MNVPR) are cytoplasmic. The chain crosses the membrane as a helical span at residues 6–26 (GWLAALGSVLLVSAAQLGMRW). Residues 27–44 (GMSRLPLPEAWAGQTPEH) are Periplasmic-facing. The helical transmembrane segment at 45-65 (AALLAVALAVAAYAASLLCWL) threads the bilayer. At 66 to 76 (AALRHLPLGRA) the chain is on the cytoplasmic side. The helical transmembrane segment at 77 to 97 (YSLLSASYALVYLLAASLPAF) threads the bilayer. Topologically, residues 98–100 (EET) are periplasmic. Residues 101–121 (FTTGKTLGVGLVVLGVLTVNA) form a helical membrane-spanning segment. The Cytoplasmic segment spans residues 122–137 (RRTAAAPAHHPSRKAL).

The protein belongs to the ArnF family. In terms of assembly, heterodimer of ArnE and ArnF.

The protein localises to the cell inner membrane. It functions in the pathway bacterial outer membrane biogenesis; lipopolysaccharide biosynthesis. Functionally, translocates 4-amino-4-deoxy-L-arabinose-phosphoundecaprenol (alpha-L-Ara4N-phosphoundecaprenol) from the cytoplasmic to the periplasmic side of the inner membrane. The protein is Probable 4-amino-4-deoxy-L-arabinose-phosphoundecaprenol flippase subunit ArnF of Pseudomonas paraeruginosa (strain DSM 24068 / PA7) (Pseudomonas aeruginosa (strain PA7)).